The chain runs to 474 residues: Sulfide dehydrogenase subunit alpha (474 aa).

A propeptide spanning residues 1 to 2 is cleaved from the precursor; that stretch reads MP. 4 residues coordinate [4Fe-4S] cluster: Cys42, Cys45, Cys52, and Cys56. The [3Fe-4S] cluster site is built by Cys101, Cys107, and Cys111.

In terms of assembly, heterodimer of alpha and beta subunits. Requires FAD as cofactor. [3Fe-4S] cluster is required as a cofactor. It depends on [4Fe-4S] cluster as a cofactor.

The protein localises to the cytoplasm. It carries out the reaction n sulfur + hydrogen sulfide + NADP(+) = (n+1) sulfur + NADPH. The catalysed reaction is 2 reduced [2Fe-2S]-[ferredoxin] + NADP(+) + H(+) = 2 oxidized [2Fe-2S]-[ferredoxin] + NADPH. A bifunctional enzyme that catalyzes the reduction of elemental sulfur or polysulfide to hydrogen sulfide with NADPH as electron donor. Also functions as a reduced ferredoxin:NADP oxidoreductase with a very high affinity for reduced ferredoxin. Exhibits a broad specificity for various physiological and non-physiological substrates with varied reduction potentials such as methyl viologen, benzyl viologen, FAD, FMN, methylene blue, 2,6-dichlorophenolindophenol (DCIP), cytochrome C and ferricyanide with highest preference for benzyl viologen. Does not reduce fumarate, succinate, nitrate, nitrite, sulfate, sulfite or protons. Does not possess any hydrogenase activity or NADPH-dependent glutamate synthase activity. This chain is Sulfide dehydrogenase subunit alpha, found in Pyrococcus furiosus (strain ATCC 43587 / DSM 3638 / JCM 8422 / Vc1).